Here is a 268-residue protein sequence, read N- to C-terminus: uncharacterized protein (268 aa).

Residues 150 to 172 (LYSIADFLAYTFTYFYLATVGLA) form a helical membrane-spanning segment.

The protein localises to the host membrane. This is an uncharacterized protein from Sulfolobus islandicus rod-shaped virus 1 (SIRV-1).